The sequence spans 542 residues: Probable E3 ubiquitin-protein ligase ARI11 (542 aa).

The segment at 1 to 25 (MSSSDRDIIDIESGEEDLYSDGGND) is disordered. A compositionally biased stretch (acidic residues) spans 10–19 (DIESGEEDLY). Residues 135–342 (VDIQCGICFE…SDHKACNAFK (208 aa)) are TRIAD supradomain. Zn(2+) contacts are provided by C139, C142, C156, H158, C161, C164, C184, C189, C228, C233, C251, C253, C258, C261, H266, C271, C298, and C301. The RING-type 1 zinc-finger motif lies at 139 to 189 (CGICFESYTRKEIARVSCGHPYCKTCWTGYITTKIEDGPGCLRVKCPEPSC). The segment at 208–271 (DKYYRYFLRS…CEDAHSPVDC (64 aa)) adopts an IBR-type zinc-finger fold. The RING-type 2; atypical zinc-finger motif lies at 298-328 (CPKCKRPIEKNTGCNHMSCSAPCRHYFCWAC). The active site involves C311. The Zn(2+) site is built by C316, C320, C325, C328, H335, and C338.

Belongs to the RBR family. Ariadne subfamily. Zn(2+) is required as a cofactor.

The enzyme catalyses [E2 ubiquitin-conjugating enzyme]-S-ubiquitinyl-L-cysteine + [acceptor protein]-L-lysine = [E2 ubiquitin-conjugating enzyme]-L-cysteine + [acceptor protein]-N(6)-ubiquitinyl-L-lysine.. The protein operates within protein modification; protein ubiquitination. Its function is as follows. Might act as an E3 ubiquitin-protein ligase, or as part of E3 complex, which accepts ubiquitin from specific E2 ubiquitin-conjugating enzymes and then transfers it to substrates. In Arabidopsis thaliana (Mouse-ear cress), this protein is Probable E3 ubiquitin-protein ligase ARI11 (ARI11).